A 474-amino-acid chain; its full sequence is Pyruvate kinase (474 aa).

Arg-33 provides a ligand contact to substrate. Asn-35, Ser-37, and Asp-67 together coordinate K(+). 35–38 (NFSH) provides a ligand contact to ATP. Arg-74 and Lys-155 together coordinate ATP. Glu-220 lines the Mg(2+) pocket. Substrate-binding residues include Gly-243, Asp-244, and Thr-276. Position 244 (Asp-244) interacts with Mg(2+).

Belongs to the pyruvate kinase family. Homotetramer. Mg(2+) is required as a cofactor. K(+) serves as cofactor.

It catalyses the reaction pyruvate + ATP = phosphoenolpyruvate + ADP + H(+). Its pathway is carbohydrate degradation; glycolysis; pyruvate from D-glyceraldehyde 3-phosphate: step 5/5. This chain is Pyruvate kinase (pyk), found in Corynebacterium efficiens (strain DSM 44549 / YS-314 / AJ 12310 / JCM 11189 / NBRC 100395).